A 73-amino-acid polypeptide reads, in one-letter code: uncharacterized protein (73 aa).

A run of 2 helical transmembrane segments spans residues 7 to 27 and 47 to 67; these read LFSS…IPNL and YFGY…IIIL.

The protein localises to the cell membrane. This is an uncharacterized protein from Methanocaldococcus jannaschii (strain ATCC 43067 / DSM 2661 / JAL-1 / JCM 10045 / NBRC 100440) (Methanococcus jannaschii).